The primary structure comprises 1201 residues: MARRTWAEGLTERCELIHKDIQERNERTDIINRAISVALENLKTHVGTLEHRFTEAQTWANDLLKEQHVALDGWERTFATLGNIPARKDFPFLGRPSTPTKGSDNSTGTLRDYLDTDEVHRAGSEAVDVSSRFARQVEDVEKAVGGIAADTQHLVDAAVPAGVDGVEGLLQEVETISRKIQSDYEHVLALPNNQKTLANISRLALSHTKDLLPSLLEVSAEIQTNLEEAARQYNAAVKAAFNHMRQISLIESRLADVQSQINNLNFQSDAFDVLYTVFHMPFVYGSILIESVRRREFSDKMKSDSLTLAEEMSVFQDEEQRRRKKWIKNMGDFVSMSDTTTPGIEVNLRGQEYEWPVVSRKEIEAYIEELKTKPGMASPVQELTQLYKELDAPTRLQRRRAKAFKQGSVFDLSRSSLLLRSDDMVRSLRDEKSKLEEKVKGSESRIRKLEDLLHRQSHMGRPASGNFSIDFPSSPASPHPDTLSRRSSVSSRRMSSNQSSEEKALVQRIVHLEAELAAERETVQKLQKDAHAERQSNTDKIQEVQSTKNDLIGNLEARQREFDDERRFLEGEMKKCRIRAEELEEELDRIMESREHEKQDADERIHQLELELQDAHARAEEEIQKATDLTAYTQTLKDAEESLRIRIEELEKQESERRERERESNQALQAAFMNLSPGGSVPVDTPSIVKAIEVLSEGLSIHAKNAEESSAKAVAESKELGERLSQLESEAEELRKTSEMRASELSLVKEELAQEKTRLENVASDLDDERSKFIALQSKLASGETGSDALQERVIEEERKLADLSQRLNEVEAQARKAEGEVLVWKERVEAMAETEQHAAGRVETCGTRSQELSKQLFRQVEKVEHMLEQLGFTVVRQNGDIVVQRSSKVTALSSTAESLSQSGVVSVRPDPTLLDWMHADTSQEETDRFMAFMESLYQFDVDIFSDAIVKRVKDIEVLARKWQKEARGYRDKYHRTQSEAHDKIAYRSFKEGDLALFLPTRNQAIRSWAAFNVGAPHYFLREQDVHKLHTRDWLLARITKIEERVVDLSKSMNGANPDRRSIGEASDGTSFDDENPFELSDGLRWYLLDAMEEKPGAPATPGLGKSTVAPAHVDARGSIRLKRTSAGGNVARTLSKSLDSRRNSSNSKKGPATPSQRGNDSTTDLARQADADSTTATAGSQPREAAPTSEEVRRDQLQGP.

Positions 90–109 (FPFLGRPSTPTKGSDNSTGT) are disordered. A compositionally biased stretch (polar residues) spans 97-109 (STPTKGSDNSTGT). The stretch at 418 to 452 (LLRSDDMVRSLRDEKSKLEEKVKGSESRIRKLEDL) forms a coiled coil. 2 disordered regions span residues 458 to 503 (HMGR…SEEK) and 525 to 545 (KLQKDAHAERQSNTDKIQEVQ). Low complexity predominate over residues 485–499 (RRSSVSSRRMSSNQS). The span at 525–542 (KLQKDAHAERQSNTDKIQ) shows a compositional bias: basic and acidic residues. Coiled-coil stretches lie at residues 566–670 (RRFL…ALQA) and 710–828 (SAKA…WKER). 2 disordered regions span residues 1052–1076 (SMNGANPDRRSIGEASDGTSFDDEN) and 1115–1201 (DARG…LQGP). Residues 1133 to 1166 (RTLSKSLDSRRNSSNSKKGPATPSQRGNDSTTDL) are compositionally biased toward polar residues. Residues 1191-1201 (EEVRRDQLQGP) are compositionally biased toward basic and acidic residues.

The protein belongs to the ATG11 family. As to quaternary structure, homodimer and potential homooligomers.

It is found in the preautophagosomal structure membrane. Functionally, selective autophagy-specific protein required for pexophagy and mitophagy. In contrast to its Saccharomyces cerevisiae ATG11 ortholog, is not involved in non-selective autophagy nor in cytoplasm to vacuole transport (Cvt). The protein is Autophagy-related protein 11 of Aspergillus oryzae (strain ATCC 42149 / RIB 40) (Yellow koji mold).